Reading from the N-terminus, the 139-residue chain is uncharacterized protein (139 aa).

This is an uncharacterized protein from Encephalitozoon cuniculi (strain GB-M1) (Microsporidian parasite).